Here is a 953-residue protein sequence, read N- to C-terminus: Leucine-rich repeat receptor protein kinase HPCA1 (953 aa).

The first 23 residues, 1–23 (MSSRTGASLLLILFFFQICSVSA), serve as a signal peptide directing secretion. Residues 24 to 558 (LTNGLDASAL…EVSSKSSNKS (535 aa)) lie on the Extracellular side of the membrane. LRR repeat units lie at residues 64–88 (NDRVVSISLGNLDLEGKLPADISFL), 89–113 (SELRILDLSYNPKLSGPLPPNIGNL), 115–137 (KLRNLILVGCSFSGQIPESIGTL), 138–162 (KELIYLSLNLNKFSGTIPPSIGLLS), 164–187 (LYWFDIADNQIEGELPVSNGTSAP), and 192–216 (LLQTKHFHFGKNKLSGNIPKELFSS). Residue asparagine 182 is glycosylated (N-linked (GlcNAc...) asparagine). Residue asparagine 217 is glycosylated (N-linked (GlcNAc...) asparagine). LRR repeat units lie at residues 218–241 (MSLIHVLFDGNQFTGEIPETLSLV), 242–265 (KTLTVLRLDRNKLIGDIPSYLNNL), 266–290 (TNLNELYLANNRFTGTLPNLTSLTS), 292–311 (YTLDVSNNTLDFSPIPSWIS), 313–337 (LPSLSTLRMEGIQLNGPIPISFFSP), 339–361 (QLQTVILKRNSIVESLDFGTDVS), and 362–384 (SQLEFVDLQYNEITDYKPSANKV). N-linked (GlcNAc...) asparagine glycosylation is found at asparagine 264, asparagine 284, and asparagine 298. Asparagine 411 carries N-linked (GlcNAc...) asparagine glycosylation. Intrachain disulfides connect cysteine 421–cysteine 424 and cysteine 434–cysteine 436. Residues asparagine 456, asparagine 459, asparagine 510, and asparagine 523 are each glycosylated (N-linked (GlcNAc...) asparagine). A helical membrane pass occupies residues 559–579 (ILIGAVVGVVVLLLLLTIAGI). The Cytoplasmic segment spans residues 580–953 (YALRQKKRAE…NFPASKLEPQ (374 aa)). A phosphoserine mark is found at serine 606 and serine 607. Residues 631–905 (FSEANDVGGG…EVVKEIENIM (275 aa)) enclose the Protein kinase domain. ATP is bound by residues 637-645 (VGGGGYGKV) and lysine 659. Residue aspartate 755 is the Proton acceptor of the active site. 3 positions are modified to phosphothreonine: threonine 786, threonine 789, and threonine 790. The span at 912-921 (PNSDSATSSR) shows a compositional bias: polar residues. The interval 912 to 953 (PNSDSATSSRTYEDAIKGSGDPYGSESFQYSGNFPASKLEPQ) is disordered. At serine 942 the chain carries Phosphoserine.

It belongs to the protein kinase superfamily. Ser/Thr protein kinase family. Post-translationally, autophosphorylated at Ser-606, Ser-607, Thr-786, Thr-789, Thr-790 and Ser-942 in response to extracellular hydrogen peroxide. As to expression, widely expressed.

The protein resides in the cell membrane. It catalyses the reaction L-seryl-[protein] + ATP = O-phospho-L-seryl-[protein] + ADP + H(+). The catalysed reaction is L-threonyl-[protein] + ATP = O-phospho-L-threonyl-[protein] + ADP + H(+). Its activity is regulated as follows. Activated by autophosphorylation on serine and threonine residues in response to extracellular hydrogen peroxide. In terms of biological role, leucine-rich repeat receptor protein kinase that acts as sensor of extracellular hydrogen peroxide. Required for intracellular calcium influx in response to extracellular hydrogen peroxide. Mediates hydrogen peroxide-induced activation of calcium channels in guard cells and is required for stomatal closure. This chain is Leucine-rich repeat receptor protein kinase HPCA1, found in Arabidopsis thaliana (Mouse-ear cress).